The primary structure comprises 311 residues: Aspartate carbamoyltransferase catalytic subunit (311 aa).

Positions 58 and 59 each coordinate carbamoyl phosphate. K86 provides a ligand contact to L-aspartate. Carbamoyl phosphate is bound by residues R108, H136, and Q139. Residues R169 and R223 each contribute to the L-aspartate site. Residues G264 and P265 each coordinate carbamoyl phosphate.

It belongs to the aspartate/ornithine carbamoyltransferase superfamily. ATCase family. As to quaternary structure, heterododecamer (2C3:3R2) of six catalytic PyrB chains organized as two trimers (C3), and six regulatory PyrI chains organized as three dimers (R2).

It catalyses the reaction carbamoyl phosphate + L-aspartate = N-carbamoyl-L-aspartate + phosphate + H(+). The protein operates within pyrimidine metabolism; UMP biosynthesis via de novo pathway; (S)-dihydroorotate from bicarbonate: step 2/3. Catalyzes the condensation of carbamoyl phosphate and aspartate to form carbamoyl aspartate and inorganic phosphate, the committed step in the de novo pyrimidine nucleotide biosynthesis pathway. In Pelodictyon phaeoclathratiforme (strain DSM 5477 / BU-1), this protein is Aspartate carbamoyltransferase catalytic subunit.